The following is a 135-amino-acid chain: Large ribosomal subunit protein bL21 (135 aa).

Residues 109-128 show a composition bias toward polar residues; it reads TLATAQSAPPSTSEATTDTT. The tract at residues 109-135 is disordered; sequence TLATAQSAPPSTSEATTDTTGIPAAEE.

It belongs to the bacterial ribosomal protein bL21 family. In terms of assembly, part of the 50S ribosomal subunit. Contacts protein L20.

This protein binds to 23S rRNA in the presence of protein L20. The sequence is that of Large ribosomal subunit protein bL21 from Synechococcus sp. (strain JA-3-3Ab) (Cyanobacteria bacterium Yellowstone A-Prime).